A 123-amino-acid chain; its full sequence is uncharacterized protein (123 aa).

This is an uncharacterized protein from Saccharomyces cerevisiae (strain ATCC 204508 / S288c) (Baker's yeast).